A 440-amino-acid polypeptide reads, in one-letter code: Virion host shutoff protein (440 aa).

2 disordered regions span residues 98–144 and 265–312; these read NIDH…RRKT and IDEP…AGPG. Residues 266-281 are compositionally biased toward low complexity; it reads DEPPAASEESSASDQQ.

It belongs to the herpesviridae VHS protein family.

It is found in the virion. Its function is as follows. Minor structural protein that acts as an endoribonuclease during lytic infection. Degrades host mRNAs in the cytoplasm by cutting them at preferred sites, including some in regions of translation initiation. The sequence is that of Virion host shutoff protein (UL41) from Amazona oratrix (yellow-headed parrot).